A 413-amino-acid chain; its full sequence is 3-oxoacyl-[acyl-carrier-protein] synthase 2 (413 aa).

Residues 3–412 enclose the Ketosynthase family 3 (KS3) domain; it reads KRRVVVTGLG…GTNGSLIFKK (410 aa). Active-site for beta-ketoacyl synthase activity residues include C164, H304, and H341.

It belongs to the thiolase-like superfamily. Beta-ketoacyl-ACP synthases family. Homodimer.

It catalyses the reaction a fatty acyl-[ACP] + malonyl-[ACP] + H(+) = a 3-oxoacyl-[ACP] + holo-[ACP] + CO2. The enzyme catalyses (9Z)-hexadecenoyl-[ACP] + malonyl-[ACP] + H(+) = 3-oxo-(11Z)-octadecenoyl-[ACP] + holo-[ACP] + CO2. The protein operates within lipid metabolism; fatty acid biosynthesis. Involved in the type II fatty acid elongation cycle. Catalyzes the elongation of a wide range of acyl-ACP by the addition of two carbons from malonyl-ACP to an acyl acceptor. Can efficiently catalyze the conversion of palmitoleoyl-ACP (cis-hexadec-9-enoyl-ACP) to cis-vaccenoyl-ACP (cis-octadec-11-enoyl-ACP), an essential step in the thermal regulation of fatty acid composition. The protein is 3-oxoacyl-[acyl-carrier-protein] synthase 2 (fabF) of Escherichia coli O157:H7.